Here is a 218-residue protein sequence, read N- to C-terminus: Small ribosomal subunit protein uS3c (218 aa).

A KH type-2 domain is found at 43–118 (IKNYVQKNMK…KLNISITRIE (76 aa)).

This sequence belongs to the universal ribosomal protein uS3 family. As to quaternary structure, part of the 30S ribosomal subunit.

The protein localises to the plastid. The protein resides in the chloroplast. The sequence is that of Small ribosomal subunit protein uS3c (rps3) from Populus alba (White poplar).